Here is a 413-residue protein sequence, read N- to C-terminus: Probable tRNA pseudouridine synthase D (413 aa).

The Nucleophile role is filled by D97. The 204-residue stretch at A167–E370 folds into the TRUD domain.

The protein belongs to the pseudouridine synthase TruD family.

The catalysed reaction is uridine(13) in tRNA = pseudouridine(13) in tRNA. In terms of biological role, could be responsible for synthesis of pseudouridine from uracil-13 in transfer RNAs. The sequence is that of Probable tRNA pseudouridine synthase D from Pyrobaculum arsenaticum (strain DSM 13514 / JCM 11321 / PZ6).